The chain runs to 672 residues: Acetyl-coenzyme A synthetase (672 aa).

CoA-binding positions include 205–208 and T325; that span reads RGGK. Residues 401–403, 425–430, D516, and R531 contribute to the ATP site; these read GEP and DTYWQT. S539 provides a ligand contact to CoA. R542 provides a ligand contact to ATP. Position 600 (R600) interacts with CoA.

This sequence belongs to the ATP-dependent AMP-binding enzyme family.

The enzyme catalyses acetate + ATP + CoA = acetyl-CoA + AMP + diphosphate. The protein is Acetyl-coenzyme A synthetase (facA) of Phycomyces blakesleeanus (strain ATCC 8743b / DSM 1359 / FGSC 10004 / NBRC 33097 / NRRL 1555).